We begin with the raw amino-acid sequence, 284 residues long: Bifunctional protein FolD (284 aa).

Residues 165–167, Ser190, and Ile231 contribute to the NADP(+) site; that span reads GRS.

This sequence belongs to the tetrahydrofolate dehydrogenase/cyclohydrolase family. In terms of assembly, homodimer.

The enzyme catalyses (6R)-5,10-methylene-5,6,7,8-tetrahydrofolate + NADP(+) = (6R)-5,10-methenyltetrahydrofolate + NADPH. The catalysed reaction is (6R)-5,10-methenyltetrahydrofolate + H2O = (6R)-10-formyltetrahydrofolate + H(+). The protein operates within one-carbon metabolism; tetrahydrofolate interconversion. Functionally, catalyzes the oxidation of 5,10-methylenetetrahydrofolate to 5,10-methenyltetrahydrofolate and then the hydrolysis of 5,10-methenyltetrahydrofolate to 10-formyltetrahydrofolate. This chain is Bifunctional protein FolD, found in Lysinibacillus sphaericus (strain C3-41).